The chain runs to 129 residues: Putative reactive intermediate deaminase TdcF (129 aa).

K58 carries the N6-(pyridoxal phosphate)lysine modification. Substrate is bound by residues 105–107 (RSC) and E120.

This sequence belongs to the RutC family. In terms of assembly, homotrimer.

It functions in the pathway amino-acid degradation; L-threonine degradation via propanoate pathway. Its function is as follows. May be a post-translational regulator that controls the metabolic fate of L-threonine or the potentially toxic intermediate 2-ketobutyrate. The chain is Putative reactive intermediate deaminase TdcF (tdcF) from Escherichia coli O6:H1 (strain CFT073 / ATCC 700928 / UPEC).